Reading from the N-terminus, the 347-residue chain is Heme A synthase (347 aa).

8 consecutive transmembrane segments (helical) span residues 17–37, 106–126, 132–152, 165–185, 202–222, 260–280, 295–315, and 317–337; these read LANWLLLVAVLVFAIVVVGGI, GIGAVLAGVMIVAWWKRAIPA, MIGIFALGGLQGAIGWWMVYS, LATHLIAALLIFSALVWTVLD, ALAIAAVLILAVQIMLGAFVA, IVVQFVHRWWAWAAAIAALAV, AVATLIVVQIALGIATLLTGV, and IAVAVAHQAVAVLLLAALLWA. Heme is bound at residue His-266. His-323 contacts heme.

The protein belongs to the COX15/CtaA family. Type 2 subfamily. Interacts with CtaB. Requires heme b as cofactor.

The protein resides in the cell membrane. It catalyses the reaction Fe(II)-heme o + 2 A + H2O = Fe(II)-heme a + 2 AH2. The protein operates within porphyrin-containing compound metabolism; heme A biosynthesis; heme A from heme O: step 1/1. In terms of biological role, catalyzes the conversion of heme O to heme A by two successive hydroxylations of the methyl group at C8. The first hydroxylation forms heme I, the second hydroxylation results in an unstable dihydroxymethyl group, which spontaneously dehydrates, resulting in the formyl group of heme A. The polypeptide is Heme A synthase (Rhizorhabdus wittichii (strain DSM 6014 / CCUG 31198 / JCM 15750 / NBRC 105917 / EY 4224 / RW1) (Sphingomonas wittichii)).